The following is a 417-amino-acid chain: Probable phosphoglycerate kinase (417 aa).

Val-23, Asp-24, Phe-25, Asn-26, Gln-38, Arg-39, Ser-62, His-63, Gly-65, Arg-66, Leu-121, Arg-122, His-169, and Arg-170 together coordinate (2R)-3-phosphoglycerate. Gly-213 is an ADP binding site. Gly-213 is a binding site for CDP. Residues Ala-214 and Lys-215 each coordinate AMP. Ala-214 is an ATP binding site. A Mg(2+)-binding site is contributed by Ala-214. Positions 217 and 218 each coordinate Mg(2+). Position 218 (Asp-218) interacts with CDP. Residue Lys-219 coordinates AMP. Lys-219 lines the ATP pocket. Gly-237 provides a ligand contact to ADP. Gly-237 provides a ligand contact to CDP. AMP is bound by residues Gly-238 and Gly-312. ATP contacts are provided by Gly-238 and Gly-312. CDP is bound by residues Gly-337, Ala-339, and Phe-342. Position 342 (Phe-342) interacts with ADP. Glu-343 contributes to the AMP binding site. Positions 343, 374, and 375 each coordinate ATP. Asp-374 contributes to the Mg(2+) binding site.

Belongs to the phosphoglycerate kinase family. Monomer. Requires Mg(2+) as cofactor.

The protein resides in the cytoplasm. It catalyses the reaction (2R)-3-phosphoglycerate + ATP = (2R)-3-phospho-glyceroyl phosphate + ADP. Its pathway is carbohydrate degradation; glycolysis; pyruvate from D-glyceraldehyde 3-phosphate: step 2/5. This Caenorhabditis elegans protein is Probable phosphoglycerate kinase (pgk-1).